A 70-amino-acid polypeptide reads, in one-letter code: DNA-directed RNA polymerase subunit omega (70 aa).

The protein belongs to the RNA polymerase subunit omega family. As to quaternary structure, the RNAP catalytic core consists of 2 alpha, 1 beta, 1 beta' and 1 omega subunit. When a sigma factor is associated with the core the holoenzyme is formed, which can initiate transcription.

It catalyses the reaction RNA(n) + a ribonucleoside 5'-triphosphate = RNA(n+1) + diphosphate. Promotes RNA polymerase assembly. Latches the N- and C-terminal regions of the beta' subunit thereby facilitating its interaction with the beta and alpha subunits. The polypeptide is DNA-directed RNA polymerase subunit omega (Shouchella clausii (strain KSM-K16) (Alkalihalobacillus clausii)).